The following is a 691-amino-acid chain: Pentatricopeptide repeat-containing protein ATP4, chloroplastic (691 aa).

Positions 1–17 are enriched in low complexity; it reads MASLPLCRSPSSLLPSW. Residues 1-35 constitute a chloroplast transit peptide; it reads MASLPLCRSPSSLLPSWPHRPISASFNPKNPSSPV. The segment at 1–76 is disordered; sequence MASLPLCRSP…SSNTRFLWVN (76 aa). The span at 24 to 33 shows a compositional bias: polar residues; it reads ASFNPKNPSS. A compositionally biased stretch (pro residues) spans 45–56; it reads PPQPQDPSPPSD. Residues 61-76 are compositionally biased toward polar residues; that stretch reads GTRPSSSSNTRFLWVN. PPR repeat units follow at residues 163–197, 198–232, 233–267, 268–302, 303–337, 338–372, 373–403, 411–445, 446–480, and 546–580; these read KVIL…GVQP, DNAT…GCSP, DMLT…KWQL, DPVI…GVRP, NLVV…QVQP, SRAT…AMGI, DVML…MKAS, DSWS…GFKP, NIFV…GIIP, and KMPY…GIYA. Residues 592 to 677 form the Smr domain; it reads LHLRGLSVGA…WFLTTNVAAK (86 aa).

The protein belongs to the PPR family. P subfamily.

The protein resides in the plastid. The protein localises to the chloroplast stroma. Its function is as follows. Involved in translation and accumulation of chloroplast ATP synthase subunits. Interacts with the 5'-UTR of the chloroplast bicistronic atpB and atpE mRNA and activates its translation by facilitating ribosome association with the mRNA. Required for accumulation and activity of the chloroplast ATP synthase. Enhances atpA translation and is required for accumulation of specific processed atpF and psaJ transcripts. Required for the stabilization of bicistronic rpl16 and rpl14 mRNAs. In Zea mays (Maize), this protein is Pentatricopeptide repeat-containing protein ATP4, chloroplastic.